The chain runs to 241 residues: MNVSRPSGRQADALRPVRIERAFTCHAEGSVLVSFGNTLVVCTASVEAKVPVFLRNKGEGWVTAEYGMLPRSTHTRSEREAARGKQAGRTLEIQRLIGRALRTCVDRTALGERTITLDCDVLQADGGTRTAAITGAYVALVDAVRCLEQRGQLKKSPLIGAVAAVSVGIYRGMPVLDLDYPEDSDCDTDMNVVMNDEGGVIELQGTAEQQAFRRGELDMLLALAERGTAMLFDIQREALAR.

Residues Arg-89 and 127–129 contribute to the phosphate site; that span reads GTR.

The protein belongs to the RNase PH family. As to quaternary structure, homohexameric ring arranged as a trimer of dimers.

The enzyme catalyses tRNA(n+1) + phosphate = tRNA(n) + a ribonucleoside 5'-diphosphate. Phosphorolytic 3'-5' exoribonuclease that plays an important role in tRNA 3'-end maturation. Removes nucleotide residues following the 3'-CCA terminus of tRNAs; can also add nucleotides to the ends of RNA molecules by using nucleoside diphosphates as substrates, but this may not be physiologically important. Probably plays a role in initiation of 16S rRNA degradation (leading to ribosome degradation) during starvation. This chain is Ribonuclease PH, found in Xylella fastidiosa (strain 9a5c).